The sequence spans 367 residues: Pectate lyase 1 (367 aa).

Positions 1 to 21 are cleaved as a signal peptide; that stretch reads MASPCLVAVLVFLCAIVSCYS. 2 cysteine pairs are disulfide-bonded: Cys28/Cys45 and Cys128/Cys147. Asn148 carries N-linked (GlcNAc...) asparagine glycosylation. Asp170 lines the Ca(2+) pocket. Asn178 is a glycosylation site (N-linked (GlcNAc...) asparagine). Ca(2+) contacts are provided by Asp194 and Asp198. The active site involves Arg250. N-linked (GlcNAc...) asparagine glycosylation is present at Asn293. A disulfide bridge links Cys306 with Cys312.

Belongs to the polysaccharide lyase 1 family. Amb a subfamily. The cofactor is Ca(2+).

It catalyses the reaction Eliminative cleavage of (1-&gt;4)-alpha-D-galacturonan to give oligosaccharides with 4-deoxy-alpha-D-galact-4-enuronosyl groups at their non-reducing ends.. It participates in glycan metabolism; pectin degradation; 2-dehydro-3-deoxy-D-gluconate from pectin: step 2/5. Its function is as follows. Has pectate lyase activity. The protein is Pectate lyase 1 of Hesperocyparis arizonica (Arizona cypress).